A 265-amino-acid polypeptide reads, in one-letter code: Undecaprenyl-diphosphatase 1 (265 aa).

7 helical membrane-spanning segments follow: residues 4-24 (IIIA…PISS), 42-62 (AKTF…ILYH), 84-104 (FHVF…HDVI), 108-128 (LFQP…MIFA), 184-204 (SEFS…LDLL), 217-237 (MFAV…VTFL), and 245-265 (LKPF…FVLL).

The protein belongs to the UppP family.

It is found in the cell membrane. The catalysed reaction is di-trans,octa-cis-undecaprenyl diphosphate + H2O = di-trans,octa-cis-undecaprenyl phosphate + phosphate + H(+). Its function is as follows. Catalyzes the dephosphorylation of undecaprenyl diphosphate (UPP). Confers resistance to bacitracin. This chain is Undecaprenyl-diphosphatase 1, found in Bacillus thuringiensis (strain Al Hakam).